A 108-amino-acid chain; its full sequence is Kanamycin resistance protein (108 aa).

The 99-residue stretch at 1–99 (SRTLLLERGR…PAVYMVQTRQ (99 aa)) folds into the N-acetyltransferase domain.

In Rhizobium radiobacter (Agrobacterium tumefaciens), this protein is Kanamycin resistance protein.